A 195-amino-acid chain; its full sequence is Morphogenetic protein (195 aa).

Its function is as follows. Assembly factor active in membrane morphogenesis. In Pseudomonas phage phi6 (Bacteriophage phi-6), this protein is Morphogenetic protein (P12).